Here is a 160-residue protein sequence, read N- to C-terminus: Lipoprotein signal peptidase (160 aa).

3 consecutive transmembrane segments (helical) span residues 6 to 26 (VWSS…IKYL), 58 to 78 (LAWL…AFVL), and 95 to 115 (FALV…HGYV). Residues Asp-117 and Asp-135 contribute to the active site. Residues 127–147 (SFAVFNLADAFITIGAGLIIL) traverse the membrane as a helical segment.

The protein belongs to the peptidase A8 family.

The protein localises to the cell inner membrane. It catalyses the reaction Release of signal peptides from bacterial membrane prolipoproteins. Hydrolyzes -Xaa-Yaa-Zaa-|-(S,diacylglyceryl)Cys-, in which Xaa is hydrophobic (preferably Leu), and Yaa (Ala or Ser) and Zaa (Gly or Ala) have small, neutral side chains.. Its pathway is protein modification; lipoprotein biosynthesis (signal peptide cleavage). Its function is as follows. This protein specifically catalyzes the removal of signal peptides from prolipoproteins. The polypeptide is Lipoprotein signal peptidase (Brucella abortus (strain S19)).